A 134-amino-acid chain; its full sequence is Proline-rich protein 4 (134 aa).

A signal peptide spans 1–16; sequence MLLVLLSVVLLALSSA. The disordered stretch occupies residues 28–134; sequence FTFTIPDVED…ARHPQEQPLW (107 aa). Positions 47 to 59 are enriched in pro residues; that stretch reads QRPPPEGLLPRPP. The span at 110–119 shows a compositional bias: polar residues; sequence VSLQEASSFF. A compositionally biased stretch (basic and acidic residues) spans 120–134; it reads QRDRPARHPQEQPLW.

As to expression, abundantly expressed in lacrimal gland where it is found in the acinar cells but not in the intralobular ducts. Also found in the submandibular gland, the parotid and sublingual glands.

It is found in the secreted. The sequence is that of Proline-rich protein 4 (PRR4) from Homo sapiens (Human).